Reading from the N-terminus, the 94-residue chain is Co-chaperonin GroES (94 aa).

This sequence belongs to the GroES chaperonin family. As to quaternary structure, heptamer of 7 subunits arranged in a ring. Interacts with the chaperonin GroEL.

The protein localises to the cytoplasm. In terms of biological role, together with the chaperonin GroEL, plays an essential role in assisting protein folding. The GroEL-GroES system forms a nano-cage that allows encapsulation of the non-native substrate proteins and provides a physical environment optimized to promote and accelerate protein folding. GroES binds to the apical surface of the GroEL ring, thereby capping the opening of the GroEL channel. The sequence is that of Co-chaperonin GroES from Streptococcus oralis.